The following is a 474-amino-acid chain: Flotillin-like protein 3 (474 aa).

Cysteine 35 carries S-palmitoyl cysteine lipidation. Coiled-coil stretches lie at residues 235–255 and 305–325; these read ENQR…KKAA and QYET…KEAE.

This sequence belongs to the band 7/mec-2 family. Flotillin subfamily. Post-translationally, may be palmitoylated. As to expression, expressed in all plant organs. Primarily expressed in vascular tissues. No change in spatial expression in root upon inoculation. Expression limited to the nodule vascular tissue.

It is found in the cell membrane. The protein resides in the membrane. Its subcellular location is the caveola. In terms of biological role, may act as a scaffolding protein within caveolar membranes, functionally participating in formation of caveolae or caveolae-like vesicles. May be involved in nodule formation. The sequence is that of Flotillin-like protein 3 (FLOT3) from Medicago truncatula (Barrel medic).